Here is a 125-residue protein sequence, read N- to C-terminus: Small ribosomal subunit protein uS11 (125 aa).

It belongs to the universal ribosomal protein uS11 family. As to quaternary structure, part of the 30S ribosomal subunit. Interacts with proteins S7 and S18. Binds to IF-3.

In terms of biological role, located on the platform of the 30S subunit, it bridges several disparate RNA helices of the 16S rRNA. Forms part of the Shine-Dalgarno cleft in the 70S ribosome. This Coprothermobacter proteolyticus (strain ATCC 35245 / DSM 5265 / OCM 4 / BT) protein is Small ribosomal subunit protein uS11.